A 1258-amino-acid polypeptide reads, in one-letter code: Regulator of G-protein signaling 22 (1258 aa).

The disordered stretch occupies residues 581–604 (QQLGRSEPLNAVSSKDGGLEKGSK). RGS domains lie at 845–973 (TFTD…ASRQ) and 1014–1138 (AFRK…TDEK). Residues 1145–1172 (RRQEHKQKRKASDTEEDKAGKSGVKQYA) are disordered. Residues 1154 to 1164 (KASDTEEDKAG) are compositionally biased toward basic and acidic residues.

In terms of assembly, interacts with GNA11, GNA12 and GNA13. In terms of tissue distribution, expressed testis, including in Leydig cells and spermatogenic cells from the spermatogonia to spermatid stages (at protein level).

It localises to the cytoplasm. Its subcellular location is the nucleus. Its function is as follows. Inhibits signal transduction by increasing the GTPase activity of G protein alpha subunits thereby driving them into their inactive GDP-bound form. This Mus musculus (Mouse) protein is Regulator of G-protein signaling 22 (Rgs22).